Consider the following 334-residue polypeptide: Proline-serine-threonine phosphatase-interacting protein 2 (334 aa).

Residues 4-264 enclose the F-BAR domain; the sequence is SLFKGNFWSA…SLEMCSIQRD (261 aa). A coiled-coil region spans residues 66–166; sequence GQSEINTLKR…AVSRSANLVN (101 aa). Positions 295–322 are disordered; the sequence is VPAGKATGPNLARRGPLPIPKSSPDDPN. Phosphotyrosine occurs at positions 323 and 329.

In terms of processing, phosphorylated on tyrosine.

The protein resides in the cytoplasm. Its subcellular location is the membrane. In terms of biological role, binds to F-actin. May be involved in regulation of the actin cytoskeleton. This is Proline-serine-threonine phosphatase-interacting protein 2 (PSTPIP2) from Homo sapiens (Human).